A 196-amino-acid polypeptide reads, in one-letter code: Carnitine operon protein CaiE (196 aa).

Residues 177–196 form a disordered region; it reads RQMEENRPRLQGTTDVMPKR.

This sequence belongs to the transferase hexapeptide repeat family.

It participates in amine and polyamine metabolism; carnitine metabolism. Overproduction of CaiE stimulates the activity of CaiB and CaiD. This chain is Carnitine operon protein CaiE, found in Escherichia coli O17:K52:H18 (strain UMN026 / ExPEC).